The chain runs to 470 residues: Cysteine--tRNA ligase (470 aa).

Cys27 is a binding site for Zn(2+). The 'HIGH' region signature appears at Pro29–Asn39. Zn(2+) contacts are provided by Cys207, His232, and Glu236. Residues Lys265–Ser269 carry the 'KMSKS' region motif. ATP is bound at residue Lys268.

This sequence belongs to the class-I aminoacyl-tRNA synthetase family. Monomer. It depends on Zn(2+) as a cofactor.

The protein resides in the cytoplasm. It carries out the reaction tRNA(Cys) + L-cysteine + ATP = L-cysteinyl-tRNA(Cys) + AMP + diphosphate. In Rubrobacter xylanophilus (strain DSM 9941 / JCM 11954 / NBRC 16129 / PRD-1), this protein is Cysteine--tRNA ligase.